An 882-amino-acid polypeptide reads, in one-letter code: MATFGFLSAPLKSTNEVDLVKPLTSYIDNVYNTSDNNRSDVAEAVQELNKLRSKACCQPLDKHQSALDVLTRYYDQLVAIENKIIISATQNPVVFKWKDAFDKGSLFSSRASLSLSDGSFERAAVLFNIGSLMSQIGAAQQFHTDDEIKVSAKLFQQSAGVFARLRDVVLGMVQQEPTPDLMPDTLAALSALMTAQAQEAIYIKGHKDKMKATSMVKISAQVAEFYSEAQKMMSKDIVRGLWDKDWSAIVSGKNLAYQALAQYHQSEVCGEARQIGEQLSRLAESLKLFDTAQKYLPRDITGIWDIYPSVSKAHAAAKKDNDFIYHEKVSDFRTLPTLPKAVLAKPTPMQTPMTPSFRDMFAVLVPVQVHNAMQSYDARKAELVNMETVRMREATQLMNGVLASLNLPAALDDVTSTETLPESLKLKSAKLKQNGGSSEIMRLFSELPTLYQRNEDILTETSRILNEEKESDDTMRKQLGTKWTRMSSEQLTGPLVTEIGKYRGILHTASNADKMVKEKFESHRQGIELLSKNESELRSSIPGQTAHATGETDTVRQLRQFMSQWNEVTTDRELLEKELKNTNCDIANDFLKAMAENQLINEEHISKEKIAQIFGDLKRRVQSSLDTQETLMNQIQAANNTFTGEKTGSSTGAERERILKMLAQASDAYVELKANLEEGTKFYNDLTPILVRLQQKVSDFAFARQTEKEDLMRQLQLSIVSGQAAKAVVDGVNSLVSSYLTGGTNAAQSPANAPPRPPPPRPAAPSVESPIPPPRTQQSMQATPGAPPQYNPYQQQQQPQMQQFQQHPGYYQQPMPYGQPQPMFQPQYQPTFAAPYPTFPGAFPSYQQQWPQQQQQGGFPPNPQFGQQNQQQGGGGGANPFQ.

Positions 5 to 398 (GFLSAPLKST…VRMREATQLM (394 aa)) constitute a BRO1 domain. The interval 743-882 (GTNAAQSPAN…GGGGGANPFQ (140 aa)) is disordered. Residues 752-763 (NAPPRPPPPRPA) are compositionally biased toward pro residues. Low complexity-rich tracts occupy residues 791-830 (NPYQQQQQPQMQQFQQHPGYYQQPMPYGQPQPMFQPQYQP) and 847-871 (QQQWPQQQQQGGFPPNPQFGQQNQQ). Over residues 872-882 (QGGGGGANPFQ) the composition is skewed to gly residues.

In terms of biological role, required for lin-12 degradation after it has been internalised in the vulval precursor cells. This chain is Apoptosis-linked gene 2-interacting protein X 1 (alx-1), found in Caenorhabditis elegans.